A 406-amino-acid chain; its full sequence is Acetate kinase (406 aa).

Asparagine 8 contacts Mg(2+). Lysine 15 provides a ligand contact to ATP. Arginine 92 contacts substrate. Residue aspartate 149 is the Proton donor/acceptor of the active site. ATP-binding positions include 209–213 (HLGNG), 283–285 (DFR), and 331–335 (GVGEN). Glutamate 385 is a binding site for Mg(2+).

Belongs to the acetokinase family. Homodimer. It depends on Mg(2+) as a cofactor. Mn(2+) serves as cofactor.

The protein resides in the cytoplasm. It carries out the reaction acetate + ATP = acetyl phosphate + ADP. It functions in the pathway metabolic intermediate biosynthesis; acetyl-CoA biosynthesis; acetyl-CoA from acetate: step 1/2. In terms of biological role, catalyzes the formation of acetyl phosphate from acetate and ATP. Can also catalyze the reverse reaction. This Corynebacterium aurimucosum (strain ATCC 700975 / DSM 44827 / CIP 107346 / CN-1) (Corynebacterium nigricans) protein is Acetate kinase.